Here is a 268-residue protein sequence, read N- to C-terminus: NH(3)-dependent NAD(+) synthetase (268 aa).

46–53 (GISGGQDS) provides a ligand contact to ATP. Mg(2+) is bound at residue D52. R140 is a binding site for deamido-NAD(+). T160 contacts ATP. E165 serves as a coordination point for Mg(2+). Deamido-NAD(+) contacts are provided by K173 and D180. 2 residues coordinate ATP: K189 and T211. A deamido-NAD(+)-binding site is contributed by 260–261 (HK).

The protein belongs to the NAD synthetase family. In terms of assembly, homodimer.

The enzyme catalyses deamido-NAD(+) + NH4(+) + ATP = AMP + diphosphate + NAD(+) + H(+). Its pathway is cofactor biosynthesis; NAD(+) biosynthesis; NAD(+) from deamido-NAD(+) (ammonia route): step 1/1. Its function is as follows. Catalyzes the ATP-dependent amidation of deamido-NAD to form NAD. Uses ammonia as a nitrogen source. The chain is NH(3)-dependent NAD(+) synthetase from Buchnera aphidicola subsp. Schizaphis graminum (strain Sg).